The chain runs to 313 residues: Ribose-phosphate pyrophosphokinase (313 aa).

ATP contacts are provided by residues 37 to 39 and 96 to 97; these read DGE and RQ. Residues histidine 131 and aspartate 170 each coordinate Mg(2+). Residue lysine 193 is part of the active site. D-ribose 5-phosphate-binding positions include arginine 195, aspartate 219, and 223-227; that span reads DTAGT.

This sequence belongs to the ribose-phosphate pyrophosphokinase family. Class I subfamily. Homohexamer. It depends on Mg(2+) as a cofactor.

The protein localises to the cytoplasm. It catalyses the reaction D-ribose 5-phosphate + ATP = 5-phospho-alpha-D-ribose 1-diphosphate + AMP + H(+). Its pathway is metabolic intermediate biosynthesis; 5-phospho-alpha-D-ribose 1-diphosphate biosynthesis; 5-phospho-alpha-D-ribose 1-diphosphate from D-ribose 5-phosphate (route I): step 1/1. In terms of biological role, involved in the biosynthesis of the central metabolite phospho-alpha-D-ribosyl-1-pyrophosphate (PRPP) via the transfer of pyrophosphoryl group from ATP to 1-hydroxyl of ribose-5-phosphate (Rib-5-P). This Pseudomonas aeruginosa (strain ATCC 15692 / DSM 22644 / CIP 104116 / JCM 14847 / LMG 12228 / 1C / PRS 101 / PAO1) protein is Ribose-phosphate pyrophosphokinase.